We begin with the raw amino-acid sequence, 96 residues long: Putative membrane protein insertion efficiency factor (96 aa).

Residues D68 to S96 form a disordered region. The span at Q82–S96 shows a compositional bias: pro residues.

The protein belongs to the UPF0161 family.

The protein resides in the cell membrane. Functionally, could be involved in insertion of integral membrane proteins into the membrane. This Deinococcus radiodurans (strain ATCC 13939 / DSM 20539 / JCM 16871 / CCUG 27074 / LMG 4051 / NBRC 15346 / NCIMB 9279 / VKM B-1422 / R1) protein is Putative membrane protein insertion efficiency factor.